A 345-amino-acid chain; its full sequence is Opioid-binding protein/cell adhesion molecule (345 aa).

A signal peptide spans 1–27 (MGVCGYLFLPWKCLVVVSLRLLFLVPT). Ig-like C2-type domains lie at 39 to 126 (PKAM…PKTS), 136 to 219 (PQIM…VKIT), and 223 to 310 (PPYI…ASIT). N-linked (GlcNAc...) asparagine glycosylation is found at asparagine 44, asparagine 70, and asparagine 140. A disulfide bond links cysteine 57 and cysteine 115. Disulfide bonds link cysteine 157-cysteine 202 and cysteine 244-cysteine 296. N-linked (GlcNAc...) asparagine glycosylation is found at asparagine 285, asparagine 293, and asparagine 306. The GPI-anchor amidated asparagine moiety is linked to residue asparagine 322. Positions 323–345 (SASRALACLWLSGTFFAHFFIKF) are cleaved as a propeptide — removed in mature form.

Belongs to the immunoglobulin superfamily. IgLON family.

Its subcellular location is the cell membrane. In terms of biological role, binds opioids in the presence of acidic lipids; probably involved in cell contact. This Rattus norvegicus (Rat) protein is Opioid-binding protein/cell adhesion molecule (Opcml).